Consider the following 190-residue polypeptide: Carbonic anhydrase 2 (190 aa).

It belongs to the beta-class carbonic anhydrase family. As to quaternary structure, homohexamer.

Its subcellular location is the cytoplasm. The enzyme catalyses hydrogencarbonate + H(+) = CO2 + H2O. Its function is as follows. Reversible hydration of carbon dioxide. The sequence is that of Carbonic anhydrase 2 from Flaveria linearis (Narrowleaf yellowtops).